The primary structure comprises 349 residues: Phenylalanine--tRNA ligase alpha subunit (349 aa).

Mg(2+) is bound at residue glutamate 259.

It belongs to the class-II aminoacyl-tRNA synthetase family. Phe-tRNA synthetase alpha subunit type 1 subfamily. As to quaternary structure, tetramer of two alpha and two beta subunits. Mg(2+) is required as a cofactor.

It localises to the cytoplasm. It catalyses the reaction tRNA(Phe) + L-phenylalanine + ATP = L-phenylalanyl-tRNA(Phe) + AMP + diphosphate + H(+). This Lactobacillus acidophilus (strain ATCC 700396 / NCK56 / N2 / NCFM) protein is Phenylalanine--tRNA ligase alpha subunit.